The following is a 307-amino-acid chain: Ribonuclease HII (307 aa).

Residues 44–235 (EPVAGVDEAG…VRRAGGRMEL (192 aa)) enclose the RNase H type-2 domain. Residues Asp50, Glu51, and Asp144 each contribute to the a divalent metal cation site. The interval 241–307 (ADSDDSPGFA…SRPAELLEIP (67 aa)) is disordered. The span at 250–280 (ASGPAEAVPGPAGSAGAASAAARPAAAGPAG) shows a compositional bias: low complexity. The segment covering 287–296 (RAADLRDNGD) has biased composition (basic and acidic residues).

The protein belongs to the RNase HII family. It depends on Mn(2+) as a cofactor. Requires Mg(2+) as cofactor.

It is found in the cytoplasm. It catalyses the reaction Endonucleolytic cleavage to 5'-phosphomonoester.. Functionally, endonuclease that specifically degrades the RNA of RNA-DNA hybrids. The chain is Ribonuclease HII from Acidothermus cellulolyticus (strain ATCC 43068 / DSM 8971 / 11B).